The following is a 487-amino-acid chain: MERWWFNSILFKKEFEHRCGLSKSTGSLGPIENTSESEDPNINDMKKNIHSWGGRDNSNYSNVDHLFGVKDIRNFISDETFLVRDSNGNSYSIYFDIENHIFEIDNGHSFQSELESSFYSYQNSSYRNNGSNSDDPHYDHYMYDTQYSWNNNINSCIDNYLQSQIFIETDIVSGSDNYSNSYIYSSICGEIAGSGIRTRTDGSDLTIRESSNDLDVTQKYRHLWVQCENCYGLNYKKSFKSKMNLCEQCGYHLKMSSSDRIELLIDPGTWDPMDEDMVSLDPIEFHSEEEPYKDRVDSYQRKTGLTEAVQTGIGQLNSIPVAIGVMDFQFMGGSMGSVVGEKITRLIEYATKKFLPLIIVCASGGARMQEGSLSLMQMAKISSALYDYQSNKKLFYVPILTSPTTGGVTASFGMLGDIIIAEPNAYIAFAGKRVIEQTLNKTVPEGSQAAEYLFQKGLFDLIVPRNPLKSVLSELFQLHAFFPLNQN.

The CoA carboxyltransferase N-terminal domain maps to 223-487; the sequence is LWVQCENCYG…LHAFFPLNQN (265 aa). Zn(2+)-binding residues include cysteine 227, cysteine 230, cysteine 246, and cysteine 249. The C4-type zinc finger occupies 227 to 249; that stretch reads CENCYGLNYKKSFKSKMNLCEQC.

Belongs to the AccD/PCCB family. In terms of assembly, acetyl-CoA carboxylase is a heterohexamer composed of biotin carboxyl carrier protein, biotin carboxylase and 2 subunits each of ACCase subunit alpha and ACCase plastid-coded subunit beta (accD). Requires Zn(2+) as cofactor.

The protein localises to the plastid. It localises to the chloroplast stroma. It carries out the reaction N(6)-carboxybiotinyl-L-lysyl-[protein] + acetyl-CoA = N(6)-biotinyl-L-lysyl-[protein] + malonyl-CoA. The protein operates within lipid metabolism; malonyl-CoA biosynthesis; malonyl-CoA from acetyl-CoA: step 1/1. Functionally, component of the acetyl coenzyme A carboxylase (ACC) complex. Biotin carboxylase (BC) catalyzes the carboxylation of biotin on its carrier protein (BCCP) and then the CO(2) group is transferred by the transcarboxylase to acetyl-CoA to form malonyl-CoA. In Panax ginseng (Korean ginseng), this protein is Acetyl-coenzyme A carboxylase carboxyl transferase subunit beta, chloroplastic.